The following is a 102-amino-acid chain: Small ribosomal subunit protein uS10 (102 aa).

Belongs to the universal ribosomal protein uS10 family. Part of the 30S ribosomal subunit.

Its function is as follows. Involved in the binding of tRNA to the ribosomes. The chain is Small ribosomal subunit protein uS10 from Shouchella clausii (strain KSM-K16) (Alkalihalobacillus clausii).